We begin with the raw amino-acid sequence, 789 residues long: Phenylalanine--tRNA ligase beta subunit (789 aa).

The 114-residue stretch at 38-151 (KKHLQSFVVV…NTYNVGESFF (114 aa)) folds into the tRNA-binding domain. Positions 398-474 (HNDILLNFSP…RLYGYDKILE (77 aa)) constitute a B5 domain. Mg(2+) contacts are provided by Asp452, Asp458, Glu461, and Glu462. The FDX-ACB domain occupies 694–787 (LRYQSVKRDF…ISKGFNGILR (94 aa)).

The protein belongs to the phenylalanyl-tRNA synthetase beta subunit family. Type 1 subfamily. As to quaternary structure, tetramer of two alpha and two beta subunits. The cofactor is Mg(2+).

The protein resides in the cytoplasm. It catalyses the reaction tRNA(Phe) + L-phenylalanine + ATP = L-phenylalanyl-tRNA(Phe) + AMP + diphosphate + H(+). This is Phenylalanine--tRNA ligase beta subunit from Ehrlichia ruminantium (strain Welgevonden).